A 317-amino-acid polypeptide reads, in one-letter code: Methionyl-tRNA formyltransferase (317 aa).

Residue Ser112–Pro115 participates in (6S)-5,6,7,8-tetrahydrofolate binding.

The protein belongs to the Fmt family.

The catalysed reaction is L-methionyl-tRNA(fMet) + (6R)-10-formyltetrahydrofolate = N-formyl-L-methionyl-tRNA(fMet) + (6S)-5,6,7,8-tetrahydrofolate + H(+). Functionally, attaches a formyl group to the free amino group of methionyl-tRNA(fMet). The formyl group appears to play a dual role in the initiator identity of N-formylmethionyl-tRNA by promoting its recognition by IF2 and preventing the misappropriation of this tRNA by the elongation apparatus. In Mycoplasma mycoides subsp. mycoides SC (strain CCUG 32753 / NCTC 10114 / PG1), this protein is Methionyl-tRNA formyltransferase.